Here is a 108-residue protein sequence, read N- to C-terminus: Abscisic stress-ripening protein 3 (108 aa).

Disordered stretches follow at residues 1-34 (MAEEKQHHRLFHHKNREEEGGPVDHKKKVKHHSH) and 84-108 (FAFHEHHQKKEAKKEKKAAEKGRHH). Basic and acidic residues predominate over residues 15–24 (NREEEGGPVD). The span at 25 to 34 (HKKKVKHHSH) shows a compositional bias: basic residues. Positions 95-108 (AKKEKKAAEKGRHH) are enriched in basic and acidic residues.

The protein belongs to the abscisic acid and water stress-induced protein family.

The protein is Abscisic stress-ripening protein 3 of Solanum lycopersicum (Tomato).